A 191-amino-acid chain; its full sequence is MAIHLTRIYTRTGDNGTTGLSDFSRVAKTDLRLVAYADCDETNSAIGVALALGNPDQKITDVLQQIQNDLFDAGADLSTPMQDSVRNPEYPQLRITQTHIDRLEEWCDTYNTPLPTLNSFVLPGGSPLSALLHVARTVARRAERSAWAAVEAHPGVVSMLPAKYLNRLSDLLFILSRVANTGNDVLWRPGG.

ATP contacts are provided by residues 10-18, Lys-28, 140-145, and Asn-166; these read TRTGDNGTT and RRAERS.

The protein belongs to the Cob(I)alamin adenosyltransferase family.

It localises to the cytoplasm. It carries out the reaction 2 cob(II)yrinate a,c diamide + reduced [electron-transfer flavoprotein] + 2 ATP = 2 adenosylcob(III)yrinate a,c-diamide + 2 triphosphate + oxidized [electron-transfer flavoprotein] + 3 H(+). The enzyme catalyses 2 cob(II)alamin + reduced [electron-transfer flavoprotein] + 2 ATP = 2 adenosylcob(III)alamin + 2 triphosphate + oxidized [electron-transfer flavoprotein] + 3 H(+). Its pathway is cofactor biosynthesis; adenosylcobalamin biosynthesis; adenosylcobalamin from cob(II)yrinate a,c-diamide: step 2/7. The protein is Corrinoid adenosyltransferase of Mycobacterium leprae (strain TN).